We begin with the raw amino-acid sequence, 113 residues long: Protein C21/B27 (113 aa).

The polypeptide is Protein C21/B27 (Homo sapiens (Human)).